Reading from the N-terminus, the 304-residue chain is MTRTHDDEWDLASSVGATATMVAAGRAMATKDPRGLIDDPFAEPLVRAVGVDFFTKMMDGELDLDAIENATPVRIQSMVDGMAVRTKYFDDYFVDATDAGVRQVVILASGLDSRAYRLPWPAGTVVYEIDQPRVIEFKSNTLAEVGAEPTATRRTIPIDLRGDWPAALSAAGFDPAAPTAWLAEGLLIYLPPEAQDRLFDNITALSAPGSTIATEFVPGIVDFDAERVREMSGSFREHGVDIDMASLVYAGERNHVIDYLNGLGWRAEGVTRTELFHRHGIEVPAPEHDDPLGEIIFISATRTG.

S-adenosyl-L-methionine is bound by residues Asp-130 and 159–160 (DL).

It belongs to the UPF0677 family.

In terms of biological role, exhibits S-adenosyl-L-methionine-dependent methyltransferase activity. This chain is Putative S-adenosyl-L-methionine-dependent methyltransferase MAV_4444, found in Mycobacterium avium (strain 104).